The following is a 290-amino-acid chain: Poly-beta-1,6-N-acetyl-D-glucosamine N-deacetylase (290 aa).

The first 28 residues, 1 to 28 (MKYRKLIILVLSILIILPVSTLDGHHIA), serve as a signal peptide directing secretion. Residues 114–290 (RSVWINFDDM…KRWDGFHEKD (177 aa)) enclose the NodB homology domain.

This sequence belongs to the polysaccharide deacetylase family.

Its subcellular location is the secreted. The protein resides in the cell wall. Functionally, catalyzes the N-deacetylation of poly-beta-1,6-N-acetyl-D-glucosamine (PNAG, also referred to as PIA), a biofilm adhesin polysaccharide. N-deacetylation is crucial for attachment of the polysaccharide to the bacterial cell surface; it leads to the introduction of positive charges in the otherwise neutral PIA polymer, allowing electrostatic interactions. This Staphylococcus aureus (strain MRSA252) protein is Poly-beta-1,6-N-acetyl-D-glucosamine N-deacetylase (icaB).